The sequence spans 229 residues: Probable queuosine precursor transporter (229 aa).

Transmembrane regions (helical) follow at residues 6 to 26 (FWIF…KGFG), 28 to 48 (MGLF…VVKT), 49 to 69 (VELF…IFFA), 86 to 106 (VWLG…VLLF), 118 to 138 (LETI…AFIF), 160 to 182 (LWLR…FTAV), and 192 to 214 (VWLH…SLPY).

It belongs to the vitamin uptake transporter (VUT/ECF) (TC 2.A.88) family. Q precursor transporter subfamily.

Its subcellular location is the cell membrane. Its function is as follows. Involved in the import of queuosine (Q) precursors, required for Q precursor salvage. The protein is Probable queuosine precursor transporter (ypdP) of Bacillus subtilis (strain 168).